Here is a 233-residue protein sequence, read N- to C-terminus: Syntaxin-52 (233 aa).

Over 1-209 the chain is Cytoplasmic; sequence MASSSDPWMR…NKSMKSGCSC (209 aa). One can recognise a t-SNARE coiled-coil homology domain in the interval 137 to 199; sequence RQVMREQDEG…RRVQKSLALM (63 aa). Residues 210 to 230 traverse the membrane as a helical; Anchor for type IV membrane protein segment; sequence MSMLLSVLGIVGLALVIWLLV. Topologically, residues 231 to 233 are vesicular; sequence KYL.

The protein belongs to the syntaxin family. In terms of assembly, interacts either with VTI11 and SYP21, or with VTI11 and SYP22 in the prevacuolar compartment, or with VTI12 and SYP61 in the trans-Golgi network to form t-SNARE complexes. In terms of tissue distribution, expressed in root, leaf, stem, flower and silique.

The protein resides in the golgi apparatus. The protein localises to the trans-Golgi network membrane. Its subcellular location is the prevacuolar compartment membrane. In terms of biological role, vesicle trafficking protein that functions in the secretory pathway. This is Syntaxin-52 (SYP52) from Arabidopsis thaliana (Mouse-ear cress).